Reading from the N-terminus, the 148-residue chain is MARFTIVLAVLFAAALVSASAHKTVVTTSVAEEGEEENQRGCEWESRQCQMRHCMQWMRSMRGQYEESFLRSAEANQGQFEHFRECCNELRDVKSHCRCEALRCMMRQMQQEYGMEQEMQQMQQMMQYLPRMCGMSYPTECRMRPIFA.

Positions 1 to 19 (MARFTIVLAVLFAAALVSA) are cleaved as a signal peptide. Residues 20–38 (SAHKTVVTTSVAEEGEEEN) constitute a propeptide that is removed on maturation. Residues 24–94 (TVVTTSVAEE…ECCNELRDVK (71 aa)) are involved in IgE-binding. Intrachain disulfides connect Cys-42–Cys-97, Cys-54–Cys-86, Cys-87–Cys-133, and Cys-99–Cys-141. Immunodominant epitope; binds to IgE of 14 patients out of 15 tested stretches follow at residues 46–55 (SRQCQMRHCM), 48–57 (QCQMRHCMQW), and 76–86 (NQGQFEHFREC). A propeptide spanning residues 69–76 (FLRSAEAN) is cleaved from the precursor. A propeptide spanning residues 147-148 (FA) is cleaved from the precursor.

It belongs to the 2S seed storage albumins family. In terms of assembly, the mature protein consists of a small and a large chain linked by disulfide bonds. Expressed in seeds (at protein level).

Seed storage protein. This chain is 2S seed storage protein 1, found in Sesamum indicum (Oriental sesame).